The following is a 486-amino-acid chain: Malonate-semialdehyde dehydrogenase (486 aa).

F154, K178, E181, R182, and S231 together coordinate NAD(+). C286 functions as the Nucleophile in the catalytic mechanism. Position 386 (E386) interacts with NAD(+).

The protein belongs to the aldehyde dehydrogenase family. IolA subfamily. As to quaternary structure, homotetramer.

It carries out the reaction 3-oxopropanoate + NAD(+) + CoA + H2O = hydrogencarbonate + acetyl-CoA + NADH + H(+). It catalyses the reaction 2-methyl-3-oxopropanoate + NAD(+) + CoA + H2O = propanoyl-CoA + hydrogencarbonate + NADH + H(+). The protein operates within polyol metabolism; myo-inositol degradation into acetyl-CoA; acetyl-CoA from myo-inositol: step 7/7. Its function is as follows. Catalyzes the oxidation of malonate semialdehyde (MSA) and methylmalonate semialdehyde (MMSA) into acetyl-CoA and propanoyl-CoA, respectively. Is involved in a myo-inositol catabolic pathway. Bicarbonate, and not CO2, is the end-product of the enzymatic reaction. This chain is Malonate-semialdehyde dehydrogenase, found in Bacillus cereus (strain B4264).